Reading from the N-terminus, the 428-residue chain is Enolase (428 aa).

Gln163 is a binding site for (2R)-2-phosphoglycerate. The active-site Proton donor is Glu205. Residues Asp242, Glu286, and Asp313 each coordinate Mg(2+). Residues Lys338, Arg367, Ser368, and Lys389 each coordinate (2R)-2-phosphoglycerate. Lys338 (proton acceptor) is an active-site residue.

The protein belongs to the enolase family. The cofactor is Mg(2+).

It localises to the cytoplasm. It is found in the secreted. The protein resides in the cell surface. The enzyme catalyses (2R)-2-phosphoglycerate = phosphoenolpyruvate + H2O. It participates in carbohydrate degradation; glycolysis; pyruvate from D-glyceraldehyde 3-phosphate: step 4/5. Its function is as follows. Catalyzes the reversible conversion of 2-phosphoglycerate (2-PG) into phosphoenolpyruvate (PEP). It is essential for the degradation of carbohydrates via glycolysis. In Lactobacillus acidophilus (strain ATCC 700396 / NCK56 / N2 / NCFM), this protein is Enolase.